We begin with the raw amino-acid sequence, 245 residues long: Probable membrane transporter protein YdhB (245 aa).

The next 8 helical transmembrane spans lie at 1 to 21, 34 to 56, 71 to 91, 98 to 118, 137 to 157, 177 to 197, 199 to 219, and 225 to 245; these read MLIILVMFLLGIILGFIGAGG, HIPIHTALGTSLAGMAFTSLSGA, LIVGGFAAVGSFFGAKLTSFI, YLTAGMLFLSAILILIRLFIL, ILGIAAGVLSGTFGIGSAPFI, MLVIIPLAVGGGIGYITEGFV, YVLLVKVLVGTMCGAYVGAKF, and KVVLKSAIFLTPAIAGLLLLF.

This sequence belongs to the 4-toluene sulfonate uptake permease (TSUP) (TC 2.A.102) family.

The protein resides in the cell membrane. This is Probable membrane transporter protein YdhB (ydhB) from Bacillus subtilis (strain 168).